The chain runs to 340 residues: HPr kinase/phosphorylase (340 aa).

Catalysis depends on residues His-153 and Lys-174. 168–175 is a binding site for ATP; that stretch reads GNSGLGKS. Ser-175 contacts Mg(2+). Catalysis depends on Asp-192, which acts as the Proton acceptor; for phosphorylation activity. Proton donor; for dephosphorylation activity. Residues 216–225 are important for the catalytic mechanism of both phosphorylation and dephosphorylation; the sequence is MEIRGLGVVD. Glu-217 is a binding site for Mg(2+). Arg-258 is a catalytic residue. An important for the catalytic mechanism of dephosphorylation region spans residues 279–284; sequence PINPGK.

It belongs to the HPrK/P family. As to quaternary structure, homohexamer. It depends on Mg(2+) as a cofactor.

The catalysed reaction is [HPr protein]-L-serine + ATP = [HPr protein]-O-phospho-L-serine + ADP + H(+). It catalyses the reaction [HPr protein]-O-phospho-L-serine + phosphate + H(+) = [HPr protein]-L-serine + diphosphate. In terms of biological role, catalyzes the ATP- as well as the pyrophosphate-dependent phosphorylation of a specific serine residue in HPr, a phosphocarrier protein of the phosphoenolpyruvate-dependent sugar phosphotransferase system (PTS). HprK/P also catalyzes the pyrophosphate-producing, inorganic phosphate-dependent dephosphorylation (phosphorolysis) of seryl-phosphorylated HPr (P-Ser-HPr). This Prosthecochloris aestuarii (strain DSM 271 / SK 413) protein is HPr kinase/phosphorylase.